Reading from the N-terminus, the 142-residue chain is Hemoglobin subunit alpha (142 aa).

The 141-residue stretch at 2-142 folds into the Globin domain; sequence VLSAADKTNV…VSTVLTSKYR (141 aa). Position 4 is a phosphoserine (Ser-4). The residue at position 8 (Lys-8) is an N6-succinyllysine. Thr-9 is modified (phosphothreonine). Position 12 is an N6-succinyllysine (Lys-12). Lys-17 is subject to N6-acetyllysine; alternate. An N6-succinyllysine; alternate modification is found at Lys-17. At Tyr-25 the chain carries Phosphotyrosine. An N6-succinyllysine modification is found at Lys-41. Ser-50 is subject to Phosphoserine. Position 59 (His-59) interacts with O2. His-88 is a heme b binding site. Ser-103 is modified (phosphoserine). Phosphothreonine is present on Thr-109. Ser-125 and Ser-132 each carry phosphoserine. Phosphothreonine occurs at positions 135 and 138. Ser-139 carries the post-translational modification Phosphoserine.

The protein belongs to the globin family. As to quaternary structure, heterotetramer of two alpha chains and two beta chains. As to expression, red blood cells.

Functionally, involved in oxygen transport from the lung to the various peripheral tissues. Hemopressin acts as an antagonist peptide of the cannabinoid receptor CNR1. Hemopressin-binding efficiently blocks cannabinoid receptor CNR1 and subsequent signaling. This Equus caballus (Horse) protein is Hemoglobin subunit alpha (HBA).